The following is a 475-amino-acid chain: Probable UDP-N-acetylglucosamine pyrophosphorylase (475 aa).

The Substrate binding signature appears at 103–106 (LAGG). Residues 103 to 106 (LAGG), K117, Q194, and G220 each bind UTP. Position 221 (N221) interacts with substrate. D251 contacts UTP. Residues 301 to 302 (EY) carry the Substrate binding motif. K378 is a binding site for UTP. At S405 the chain carries Phosphoserine. Residue K410 coordinates substrate.

Belongs to the UDPGP type 1 family.

Its subcellular location is the cytoplasm. It is found in the nucleus. It carries out the reaction N-acetyl-alpha-D-glucosamine 1-phosphate + UTP + H(+) = UDP-N-acetyl-alpha-D-glucosamine + diphosphate. It functions in the pathway nucleotide-sugar biosynthesis; UDP-N-acetyl-alpha-D-glucosamine biosynthesis; UDP-N-acetyl-alpha-D-glucosamine from N-acetyl-alpha-D-glucosamine 1-phosphate: step 1/1. In Schizosaccharomyces pombe (strain 972 / ATCC 24843) (Fission yeast), this protein is Probable UDP-N-acetylglucosamine pyrophosphorylase (uap1).